The chain runs to 220 residues: Deoxyribose-phosphate aldolase (220 aa).

D89 functions as the Proton donor/acceptor in the catalytic mechanism. K151 serves as the catalytic Schiff-base intermediate with acetaldehyde. The active-site Proton donor/acceptor is the K180.

It belongs to the DeoC/FbaB aldolase family. DeoC type 1 subfamily.

The protein localises to the cytoplasm. It carries out the reaction 2-deoxy-D-ribose 5-phosphate = D-glyceraldehyde 3-phosphate + acetaldehyde. It participates in carbohydrate degradation; 2-deoxy-D-ribose 1-phosphate degradation; D-glyceraldehyde 3-phosphate and acetaldehyde from 2-deoxy-alpha-D-ribose 1-phosphate: step 2/2. Catalyzes a reversible aldol reaction between acetaldehyde and D-glyceraldehyde 3-phosphate to generate 2-deoxy-D-ribose 5-phosphate. The protein is Deoxyribose-phosphate aldolase of Streptococcus suis (strain 98HAH33).